A 588-amino-acid chain; its full sequence is BTB/POZ domain-containing protein At3g26490 (588 aa).

The BTB domain maps to 28 to 99; that stretch reads NDLVIQVKST…CYGITITLCA (72 aa). The NPH3 domain occupies 218–507; it reads RWWGEDLAEL…VQILFVEQAR (290 aa). A phosphoserine mark is found at S376 and S378. Phosphotyrosine is present on Y448. The disordered stretch occupies residues 529–554; the sequence is FTTRREEGGQEEEERDETKPSGGFLQ.

Belongs to the NPH3 family.

It functions in the pathway protein modification; protein ubiquitination. May act as a substrate-specific adapter of an E3 ubiquitin-protein ligase complex (CUL3-RBX1-BTB) which mediates the ubiquitination and subsequent proteasomal degradation of target proteins. The sequence is that of BTB/POZ domain-containing protein At3g26490 from Arabidopsis thaliana (Mouse-ear cress).